The chain runs to 135 residues: T-cell receptor gamma chain V region V108A (135 aa).

Residues 1–18 form the signal peptide; the sequence is MLLLRWFTSCCLWVFGLG. The segment at 19-116 is v segment; it reads QLEQTELSVT…EATYYCAVWM (98 aa). The segment at 117-135 is j segment; the sequence is RWSSGFHKVFAEGTKLIVI.

This Mus musculus (Mouse) protein is T-cell receptor gamma chain V region V108A.